We begin with the raw amino-acid sequence, 153 residues long: Ubiquitin/ISG15-conjugating enzyme E2 L6 (153 aa).

The UBC core domain maps to 2–149 (MASKRVAKEL…AEEFTLKFGV (148 aa)). Residue Cys86 is the Glycyl thioester intermediate of the active site.

Belongs to the ubiquitin-conjugating enzyme family. As to quaternary structure, interacts with RNF19A, RNF19B and RNF144B. Interacts with FLT3 (tyrosine phosphorylated). Post-translationally, ISGylated.

It catalyses the reaction S-ubiquitinyl-[E1 ubiquitin-activating enzyme]-L-cysteine + [E2 ubiquitin-conjugating enzyme]-L-cysteine = [E1 ubiquitin-activating enzyme]-L-cysteine + S-ubiquitinyl-[E2 ubiquitin-conjugating enzyme]-L-cysteine.. Its pathway is protein modification; protein ubiquitination. Its function is as follows. Catalyzes the covalent attachment of ubiquitin or ISG15 to other proteins. Functions in the E6/E6-AP-induced ubiquitination of p53/TP53. Promotes ubiquitination and subsequent proteasomal degradation of FLT3. This Mus musculus (Mouse) protein is Ubiquitin/ISG15-conjugating enzyme E2 L6 (Ube2l6).